Here is a 226-residue protein sequence, read N- to C-terminus: MAITLSNVNSEAGLQKLDEYLLTRSYISGYQASKDDMTVFTSLPSAPAASYVNVTRWYDHISALLRSSGVTAEGEGVKVESTACSVSPTADQKAPAADEEDDDDVDLFGEETEEEKKAAEERAAAVKASGKKKESGKSSVLLDVKPWDDETDMAKLEEAVRNVKMEGLLWGASKLVPVGYGIKKLQIMMTIVDDLVSVDSLIEDYFYTEPANEFIQSCDIVAFNKI.

The interval 82 to 131 is disordered; sequence TACSVSPTADQKAPAADEEDDDDVDLFGEETEEEKKAAEERAAAVKASGK. The segment covering 97-113 has biased composition (acidic residues); sequence ADEEDDDDVDLFGEETE. Positions 114–124 are enriched in basic and acidic residues; the sequence is EEKKAAEERAA.

Belongs to the EF-1-beta/EF-1-delta family. EF-1 is composed of 4 subunits: alpha, beta (1B-alpha=beta'), delta (1B-beta), and gamma (1B-gamma).

EF-1-beta and EF-1-beta' stimulate the exchange of GDP bound to EF-1-alpha to GTP. The protein is Elongation factor 1-delta 2 of Oryza sativa subsp. japonica (Rice).